The chain runs to 258 residues: Protease HtpX homolog (258 aa).

2 helical membrane passes run 24–44 (VLLFGLIYAILMVVGSILGLG) and 45–65 (GPLFYALLGFGVIFLQYLISP). H146 contacts Zn(2+). The active site involves E147. H150 is a Zn(2+) binding site. Helical transmembrane passes span 157-177 (IVMTLVSAVPLICYYIFWSTV) and 186-206 (LVGIAALIAYFIGQLIVLFIS). E210 is a Zn(2+) binding site.

The protein belongs to the peptidase M48B family. The cofactor is Zn(2+).

It is found in the cell membrane. This chain is Protease HtpX homolog, found in Methanothermobacter thermautotrophicus (strain ATCC 29096 / DSM 1053 / JCM 10044 / NBRC 100330 / Delta H) (Methanobacterium thermoautotrophicum).